A 1300-amino-acid polypeptide reads, in one-letter code: Insulin receptor-related protein (1300 aa).

Residues 1–26 (MARPKLWPWGILLLVSLLSAGFNLDT) form the signal peptide. An N-linked (GlcNAc...) asparagine glycan is attached at Asn-47. 9 disulfides stabilise this stretch: Cys-214-Cys-222, Cys-216-Cys-228, Cys-229-Cys-237, Cys-233-Cys-246, Cys-249-Cys-258, Cys-262-Cys-274, Cys-280-Cys-300, Cys-304-Cys-317, and Cys-320-Cys-324. The N-linked (GlcNAc...) asparagine glycan is linked to Asn-311. N-linked (GlcNAc...) asparagine glycans are attached at residues Asn-411, Asn-492, Asn-528, Asn-616, Asn-634, Asn-756, Asn-885, and Asn-898. Fibronectin type-III domains are found at residues 483 to 603 (QTRT…TLPA) and 607 to 707 (VPQD…AQEA). An intrachain disulfide couples Cys-657 to Cys-864. A disordered region spans residues 740 to 762 (DAGRHRRAIGSPRPGGNSSDFEI). At 747 to 921 (AIGSPRPGGN…PEEEDSGGLH (175 aa)) the chain is on the extracellular side. The Fibronectin type-III 3 domain maps to 818–912 (IPGKLSWEAA…DSVAFYIPGP (95 aa)). A helical membrane pass occupies residues 922–943 (ILLTVTPAGLMLLIILAALGFF). The Cytoplasmic portion of the chain corresponds to 944–1300 (YSRKRNGTLY…CSLQNGGPEH (357 aa)). In terms of domain architecture, Protein kinase spans 979-1254 (ISIIRELGQG…SIQKELRPSF (276 aa)). Residues 985 to 993 (LGQGSFGMV) and Lys-1013 each bind ATP. Asp-1115 serves as the catalytic Proton acceptor. Phosphotyrosine; by autocatalysis is present on residues Tyr-1145 and Tyr-1146. The segment at 1270-1300 (GLQPTTDAESSSPPTSKGASDCSLQNGGPEH) is disordered. Over residues 1272 to 1300 (QPTTDAESSSPPTSKGASDCSLQNGGPEH) the composition is skewed to polar residues.

Belongs to the protein kinase superfamily. Tyr protein kinase family. Insulin receptor subfamily. Probable tetramer of 2 alpha and 2 beta chains linked by disulfide bonds. The alpha chains contribute to the formation of the ligand-binding domain, while the beta chains carry the kinase domain. In terms of processing, autophosphorylated on tyrosine residues between pH 7.9 and pH 10.5.

The protein localises to the membrane. It catalyses the reaction L-tyrosyl-[protein] + ATP = O-phospho-L-tyrosyl-[protein] + ADP + H(+). Its function is as follows. Receptor with tyrosine-protein kinase activity. Functions as a pH sensing receptor which is activated by increased extracellular pH. Activates an intracellular signaling pathway that involves IRS1 and AKT1/PKB. This Cavia porcellus (Guinea pig) protein is Insulin receptor-related protein (INSRR).